The sequence spans 171 residues: Secreted thaumatin-like protein calA (171 aa).

Positions 1-18 (MLFNKIISLAATLATASA) are cleaved as a signal peptide. Asparagine 37 and asparagine 141 each carry an N-linked (GlcNAc...) asparagine glycan. Disulfide bonds link cysteine 130-cysteine 157 and cysteine 135-cysteine 142.

It belongs to the thaumatin family.

It localises to the secreted. It is found in the extracellular space. The protein localises to the extracellular matrix. Its subcellular location is the cell wall. Functionally, secreted thaumatin-like protein that, with cetA, plays an essential role in early conidial germination with a possible role in cell wall remodeling. In Emericella nidulans (strain FGSC A4 / ATCC 38163 / CBS 112.46 / NRRL 194 / M139) (Aspergillus nidulans), this protein is Secreted thaumatin-like protein calA.